Here is a 580-residue protein sequence, read N- to C-terminus: Type II methyltransferase M.BanIII (580 aa).

This sequence belongs to the N(4)/N(6)-methyltransferase family.

It carries out the reaction a 2'-deoxyadenosine in DNA + S-adenosyl-L-methionine = an N(6)-methyl-2'-deoxyadenosine in DNA + S-adenosyl-L-homocysteine + H(+). Functionally, a gamma subtype methylase, recognizes the double-stranded sequence 5'-ATCGAT-3', methylates A-5 on both strands, and protects the DNA from cleavage by the BanIII endonuclease. The protein is Type II methyltransferase M.BanIII (banIIIM) of Aneurinibacillus aneurinilyticus (Bacillus aneurinolyticus).